The following is an 804-amino-acid chain: Phenylalanine--tRNA ligase beta subunit (804 aa).

Residues 38-148 (RAAFRAFTIA…ENAPVGTSFA (111 aa)) form the tRNA-binding domain. The B5 domain maps to 401 to 476 (HTARVIDFPV…RIHGINRIDP (76 aa)). Mg(2+)-binding residues include aspartate 454, aspartate 460, glutamate 463, and glutamate 464. An FDX-ACB domain is found at 710-803 (SLFQSLKRDY…VAKQTGGVLR (94 aa)).

Belongs to the phenylalanyl-tRNA synthetase beta subunit family. Type 1 subfamily. In terms of assembly, tetramer of two alpha and two beta subunits. It depends on Mg(2+) as a cofactor.

The protein localises to the cytoplasm. The catalysed reaction is tRNA(Phe) + L-phenylalanine + ATP = L-phenylalanyl-tRNA(Phe) + AMP + diphosphate + H(+). This is Phenylalanine--tRNA ligase beta subunit from Brucella suis biovar 1 (strain 1330).